A 949-amino-acid polypeptide reads, in one-letter code: Translation initiation factor IF-2 (949 aa).

Disordered regions lie at residues 50–206 (FTEK…GAAR) and 220–359 (QNAE…TERK). 2 stretches are compositionally biased toward basic and acidic residues: residues 52 to 84 (EKPK…KVEK) and 104 to 143 (FKAE…DQGS). 2 stretches are compositionally biased toward polar residues: residues 144-154 (KNRNFNKSQGQ) and 164-180 (GSQQ…SNKP). Low complexity predominate over residues 187–206 (NAANRNQNNSQQERQVGAAR). Residues 224-275 (YMRHKETQLREQEEARRLAERAKEEARLAAQKAAEEKAKEAEKAAKTERFEP) are compositionally biased toward basic and acidic residues. Positions 319-336 (KSWNNQNQVRNQRNSNWN) are enriched in low complexity. The 170-residue stretch at 450-619 (ERAPVVTIMG…LLVAEVEELK (170 aa)) folds into the tr-type G domain. The G1 stretch occupies residues 459–466 (GHVDHGKT). 459–466 (GHVDHGKT) lines the GTP pocket. The interval 484 to 488 (GITQH) is G2. The G3 stretch occupies residues 505 to 508 (DTPG). GTP is bound by residues 505–509 (DTPGH) and 559–562 (NKID). The G4 stretch occupies residues 559-562 (NKID). Residues 595 to 597 (SAK) form a G5 region.

It belongs to the TRAFAC class translation factor GTPase superfamily. Classic translation factor GTPase family. IF-2 subfamily.

It is found in the cytoplasm. One of the essential components for the initiation of protein synthesis. Protects formylmethionyl-tRNA from spontaneous hydrolysis and promotes its binding to the 30S ribosomal subunits. Also involved in the hydrolysis of GTP during the formation of the 70S ribosomal complex. The polypeptide is Translation initiation factor IF-2 (Streptococcus uberis (strain ATCC BAA-854 / 0140J)).